The chain runs to 124 residues: Holo-[acyl-carrier-protein] synthase (124 aa).

Positions 8 and 56 each coordinate Mg(2+).

It belongs to the P-Pant transferase superfamily. AcpS family. Mg(2+) is required as a cofactor.

It is found in the cytoplasm. The catalysed reaction is apo-[ACP] + CoA = holo-[ACP] + adenosine 3',5'-bisphosphate + H(+). Functionally, transfers the 4'-phosphopantetheine moiety from coenzyme A to a Ser of acyl-carrier-protein. The sequence is that of Holo-[acyl-carrier-protein] synthase from Clostridium acetobutylicum (strain ATCC 824 / DSM 792 / JCM 1419 / IAM 19013 / LMG 5710 / NBRC 13948 / NRRL B-527 / VKM B-1787 / 2291 / W).